Here is a 560-residue protein sequence, read N- to C-terminus: Serine/threonine-protein kinase TOS3 (560 aa).

The region spanning 50–344 (FEILATLGNG…LADIKVHPFM (295 aa)) is the Protein kinase domain. ATP is bound by residues 56–64 (LGNGQYGKV) and Lys79. The Proton acceptor role is filled by Asp189.

The protein belongs to the protein kinase superfamily. Ser/Thr protein kinase family. In terms of processing, autophosphorylated.

It catalyses the reaction L-seryl-[protein] + ATP = O-phospho-L-seryl-[protein] + ADP + H(+). It carries out the reaction L-threonyl-[protein] + ATP = O-phospho-L-threonyl-[protein] + ADP + H(+). Functionally, one of the three SNF1 protein kinases (with SAK1 and ELM1) which are required for growth on nonfermentable carbon sources and nonpreferred sugars and for response to environmental stress. Activates SNF1 by phosphorylation of its activation-loop 'Thr-210'. Required for the regulation by SNF1 of the transcription of a large set of genes, the modification the activity of metabolic enzymes, and the control of various nutrient-responsive cellular developmental processes. Also phosphorylates GAL83, MIG1 and SIP2. In Saccharomyces cerevisiae (strain YJM789) (Baker's yeast), this protein is Serine/threonine-protein kinase TOS3 (TOS3).